A 125-amino-acid polypeptide reads, in one-letter code: Snaclec VP12 subunit B (125 aa).

3 disulfides stabilise this stretch: cysteine 4-cysteine 15, cysteine 32-cysteine 121, and cysteine 98-cysteine 113. The region spanning 11–122 (FEKYCYKVFQ…CNDPRYFVCK (112 aa)) is the C-type lectin domain.

The protein belongs to the snaclec family. Heterodimer of subunits alpha and beta; disulfide-linked. In terms of tissue distribution, expressed by the venom gland.

It is found in the secreted. Inhibits integrin alpha-2/beta-1- (ITGA2/ITGB1) dependent melanoma metastasis. This chain is Snaclec VP12 subunit B, found in Daboia palaestinae (Palestine viper).